The chain runs to 148 residues: Cysteine-rich venom protein VAR6 (148 aa).

An N-terminal signal peptide occupies residues methionine 1 to serine 22. Residues asparagine 41 to glutamine 140 form the SCP domain.

Belongs to the CRISP family. Post-translationally, contains 8 disulfide bonds. As to expression, expressed by the venom gland.

It is found in the secreted. Blocks ryanodine receptors, and potassium channels. In Varanus acanthurus (Ridge-tailed monitor), this protein is Cysteine-rich venom protein VAR6.